Here is a 537-residue protein sequence, read N- to C-terminus: Phosphoenolpyruvate carboxykinase (ATP) (537 aa).

Positions 61, 195, and 201 each coordinate substrate. ATP is bound by residues Lys201, His220, and 236–244 (GLSGTGKTT). Mn(2+) contacts are provided by Lys201 and His220. A Mn(2+)-binding site is contributed by Asp257. Glu285, Arg323, and Thr448 together coordinate ATP. Arg323 serves as a coordination point for substrate.

Belongs to the phosphoenolpyruvate carboxykinase (ATP) family. The cofactor is Mn(2+).

The protein resides in the cytoplasm. The catalysed reaction is oxaloacetate + ATP = phosphoenolpyruvate + ADP + CO2. It functions in the pathway carbohydrate biosynthesis; gluconeogenesis. Functionally, involved in the gluconeogenesis. Catalyzes the conversion of oxaloacetate (OAA) to phosphoenolpyruvate (PEP) through direct phosphoryl transfer between the nucleoside triphosphate and OAA. This Azorhizobium caulinodans (strain ATCC 43989 / DSM 5975 / JCM 20966 / LMG 6465 / NBRC 14845 / NCIMB 13405 / ORS 571) protein is Phosphoenolpyruvate carboxykinase (ATP).